The following is a 185-amino-acid chain: Shikimate kinase (185 aa).

Position 15-20 (15-20) interacts with ATP; sequence GAGKST. Serine 19 is a binding site for Mg(2+). Residues aspartate 37, arginine 61, and glycine 83 each coordinate substrate. Residue arginine 121 coordinates ATP. Arginine 146 lines the substrate pocket.

It belongs to the shikimate kinase family. In terms of assembly, monomer. It depends on Mg(2+) as a cofactor.

It is found in the cytoplasm. It catalyses the reaction shikimate + ATP = 3-phosphoshikimate + ADP + H(+). The protein operates within metabolic intermediate biosynthesis; chorismate biosynthesis; chorismate from D-erythrose 4-phosphate and phosphoenolpyruvate: step 5/7. In terms of biological role, catalyzes the specific phosphorylation of the 3-hydroxyl group of shikimic acid using ATP as a cosubstrate. The sequence is that of Shikimate kinase from Blochmanniella floridana.